A 537-amino-acid chain; its full sequence is Hexosyltransferase GAUT11 (537 aa).

The Cytoplasmic segment spans residues 1 to 16 (MRRWPVDHRRRGRRRL). The chain crosses the membrane as a helical; Signal-anchor for type II membrane protein span at residues 17–37 (SSWIWFLLGSFSVAGLVLFIV). Over 38–537 (QHYHHQQDPS…HPYLQDCVTA (500 aa)) the chain is Lumenal. N-linked (GlcNAc...) asparagine glycosylation is found at Asn66, Asn247, Asn299, Asn403, Asn436, and Asn525.

The protein belongs to the glycosyltransferase 8 family. In terms of assembly, monomer. In terms of tissue distribution, expressed in roots, inflorescences, siliques, seeds, leaves and stems.

The protein localises to the golgi apparatus membrane. It carries out the reaction [(1-&gt;4)-alpha-D-galacturonosyl](n) + UDP-alpha-D-galacturonate = [(1-&gt;4)-alpha-D-galacturonosyl](n+1) + UDP + H(+). It participates in glycan metabolism; pectin biosynthesis. In terms of biological role, glycosyltransferase involved in pectin and/or xylans biosynthesis in cell walls. Required for the biosynthesis of pectin in seed coat epidermal (SCE) cells. Collaboratively with MUCI70, essential for the accumulation of seed mucilage, a gelatinous wall rich in unbranched rhamnogalacturonan I (RG I), and for shaping the surface morphology of seeds. Catalyzes homogalacturonan (HG) elongation by acting as an HG alpha-1,4 galacturonic acid transferase. This Arabidopsis thaliana (Mouse-ear cress) protein is Hexosyltransferase GAUT11.